Here is a 354-residue protein sequence, read N- to C-terminus: NAD-dependent protein deacetylase hst2-2 (354 aa).

The Deacetylase sirtuin-type domain occupies 16-279; that stretch reads QCQNQTTLDS…REVARHLGWD (264 aa). Residues 43-63 and 126-129 each bind NAD(+); these read GAGL…TGLY and QNID. Histidine 146 serves as the catalytic Proton acceptor. The Zn(2+) site is built by cysteine 154, cysteine 157, cysteine 178, and cysteine 183. Residues 220-222, 245-247, and cysteine 265 contribute to the NAD(+) site; these read GTS and NRE.

Belongs to the sirtuin family. Class I subfamily. It depends on Zn(2+) as a cofactor.

It is found in the nucleus. It carries out the reaction N(6)-acetyl-L-lysyl-[protein] + NAD(+) + H2O = 2''-O-acetyl-ADP-D-ribose + nicotinamide + L-lysyl-[protein]. In terms of biological role, NAD-dependent histone deacetylase, which could function in telomeric silencing, cell cycle progression and chromosome stability. The polypeptide is NAD-dependent protein deacetylase hst2-2 (Emericella nidulans (strain FGSC A4 / ATCC 38163 / CBS 112.46 / NRRL 194 / M139) (Aspergillus nidulans)).